A 691-amino-acid polypeptide reads, in one-letter code: DNA-directed RNA polymerase subunit beta' (691 aa).

The protein belongs to the RNA polymerase beta' chain family. RpoC1 subfamily. In plastids the minimal PEP RNA polymerase catalytic core is composed of four subunits: alpha, beta, beta', and beta''. When a (nuclear-encoded) sigma factor is associated with the core the holoenzyme is formed, which can initiate transcription.

The protein localises to the plastid. The enzyme catalyses RNA(n) + a ribonucleoside 5'-triphosphate = RNA(n+1) + diphosphate. DNA-dependent RNA polymerase catalyzes the transcription of DNA into RNA using the four ribonucleoside triphosphates as substrates. This chain is DNA-directed RNA polymerase subunit beta' (rpoC1), found in Cuscuta reflexa (Southern Asian dodder).